The primary structure comprises 249 residues: DNA repair protein RecO (249 aa).

Belongs to the RecO family.

In terms of biological role, involved in DNA repair and RecF pathway recombination. This chain is DNA repair protein RecO, found in Rhodopseudomonas palustris (strain BisB5).